Here is a 181-residue protein sequence, read N- to C-terminus: Large ribosomal subunit protein uL5 (181 aa).

Belongs to the universal ribosomal protein uL5 family. As to quaternary structure, part of the 50S ribosomal subunit; part of the 5S rRNA/L5/L18/L25 subcomplex. Contacts the 5S rRNA and the P site tRNA. Forms a bridge to the 30S subunit in the 70S ribosome.

In terms of biological role, this is one of the proteins that bind and probably mediate the attachment of the 5S RNA into the large ribosomal subunit, where it forms part of the central protuberance. In the 70S ribosome it contacts protein S13 of the 30S subunit (bridge B1b), connecting the 2 subunits; this bridge is implicated in subunit movement. Contacts the P site tRNA; the 5S rRNA and some of its associated proteins might help stabilize positioning of ribosome-bound tRNAs. This Helicobacter pylori (strain J99 / ATCC 700824) (Campylobacter pylori J99) protein is Large ribosomal subunit protein uL5.